Consider the following 37-residue polypeptide: Large ribosomal subunit protein bL36 (37 aa).

The protein belongs to the bacterial ribosomal protein bL36 family.

This chain is Large ribosomal subunit protein bL36, found in Bifidobacterium adolescentis (strain ATCC 15703 / DSM 20083 / NCTC 11814 / E194a).